Reading from the N-terminus, the 188-residue chain is Mediator of RNA polymerase II transcription subunit 29 (188 aa).

2 stretches are compositionally biased toward low complexity: residues 1–23 (MNPN…QSSP) and 30–43 (VQHQ…PLQQ). The disordered stretch occupies residues 1 to 43 (MNPNMNMMPMSGPQMMQVMQSSPSGPPGPVQHQQQQPPQPLQQ).

This sequence belongs to the Mediator complex subunit 29 family. As to quaternary structure, component of the Mediator complex. Self-associates. Interacts with dsx.

Its subcellular location is the nucleus. Functionally, component of the Mediator complex, a coactivator involved in the regulated transcription of nearly all RNA polymerase II-dependent genes. Mediator functions as a bridge to convey information from gene-specific regulatory proteins to the basal RNA polymerase II transcription machinery. Mediator is recruited to promoters by direct interactions with regulatory proteins and serves as a scaffold for the assembly of a functional preinitiation complex with RNA polymerase II and the general transcription factors. Required for female somatic sexual development. The sequence is that of Mediator of RNA polymerase II transcription subunit 29 (ix) from Drosophila melanogaster (Fruit fly).